Consider the following 487-residue polypeptide: Glutamyl-tRNA(Gln) amidotransferase subunit A (487 aa).

Residues K79 and S154 each act as charge relay system in the active site. S178 serves as the catalytic Acyl-ester intermediate.

This sequence belongs to the amidase family. GatA subfamily. As to quaternary structure, heterotrimer of A, B and C subunits.

It carries out the reaction L-glutamyl-tRNA(Gln) + L-glutamine + ATP + H2O = L-glutaminyl-tRNA(Gln) + L-glutamate + ADP + phosphate + H(+). Its function is as follows. Allows the formation of correctly charged Gln-tRNA(Gln) through the transamidation of misacylated Glu-tRNA(Gln) in organisms which lack glutaminyl-tRNA synthetase. The reaction takes place in the presence of glutamine and ATP through an activated gamma-phospho-Glu-tRNA(Gln). In Roseiflexus sp. (strain RS-1), this protein is Glutamyl-tRNA(Gln) amidotransferase subunit A.